The primary structure comprises 492 residues: Ribose import ATP-binding protein RbsA (492 aa).

2 consecutive ABC transporter domains span residues 3-239 (IDMR…VGRK) and 238-492 (RKLE…TGGK). Position 35-42 (35-42 (GENGAGKS)) interacts with ATP.

The protein belongs to the ABC transporter superfamily. Ribose importer (TC 3.A.1.2.1) family. In terms of assembly, the complex is composed of an ATP-binding protein (RbsA), two transmembrane proteins (RbsC) and a solute-binding protein (RbsB).

Its subcellular location is the cell membrane. The catalysed reaction is D-ribose(out) + ATP + H2O = D-ribose(in) + ADP + phosphate + H(+). Part of the ABC transporter complex RbsABC involved in ribose import. Responsible for energy coupling to the transport system. The polypeptide is Ribose import ATP-binding protein RbsA (Streptococcus agalactiae serotype V (strain ATCC BAA-611 / 2603 V/R)).